Here is a 382-residue protein sequence, read N- to C-terminus: Succinate--CoA ligase [ADP-forming] subunit beta (382 aa).

The 232-residue stretch at 9 to 240 folds into the ATP-grasp domain; the sequence is KELFLRYGVK…PRDITEFEAY (232 aa). ATP is bound by residues Lys-45, 52-54, Val-94, and Glu-99; that span reads GRG. Positions 193 and 207 each coordinate Mg(2+). Substrate-binding positions include Asn-260 and 317 to 319; that span reads GIT.

It belongs to the succinate/malate CoA ligase beta subunit family. As to quaternary structure, heterotetramer of two alpha and two beta subunits. Mg(2+) serves as cofactor.

The enzyme catalyses succinate + ATP + CoA = succinyl-CoA + ADP + phosphate. It catalyses the reaction GTP + succinate + CoA = succinyl-CoA + GDP + phosphate. It functions in the pathway carbohydrate metabolism; tricarboxylic acid cycle; succinate from succinyl-CoA (ligase route): step 1/1. Functionally, succinyl-CoA synthetase functions in the citric acid cycle (TCA), coupling the hydrolysis of succinyl-CoA to the synthesis of either ATP or GTP and thus represents the only step of substrate-level phosphorylation in the TCA. The beta subunit provides nucleotide specificity of the enzyme and binds the substrate succinate, while the binding sites for coenzyme A and phosphate are found in the alpha subunit. The chain is Succinate--CoA ligase [ADP-forming] subunit beta from Pyrobaculum islandicum (strain DSM 4184 / JCM 9189 / GEO3).